We begin with the raw amino-acid sequence, 817 residues long: Actin filament-associated protein 1-like 2 (817 aa).

Tyrosine 56 carries the phosphotyrosine modification. The segment at 63-164 (HKQQNAESQD…KGKSAPHQWP (102 aa)) is disordered. A compositionally biased stretch (acidic residues) spans 123 to 139 (YYEEAEPYDTSLNEDGE). 2 consecutive PH domains span residues 175–271 (DARI…EVSG) and 353–447 (SLET…SESG). At serine 408 the chain carries Phosphoserine. Tyrosine 413 is modified (phosphotyrosine). The residue at position 484 (serine 484) is a Phosphoserine. The span at 512-528 (TTAGEAPEEATPATDAP) shows a compositional bias: low complexity. 2 disordered regions span residues 512-657 (TTAG…KLGK) and 754-786 (GTTV…VNSA). The stretch at 652–748 (EIKLGKNRTE…VKDSLRKAEA (97 aa)) forms a coiled coil. A compositionally biased stretch (polar residues) spans 754–763 (GTTVDTTHLE). The span at 767 to 782 (PRPKAATPTPAPDCTP) shows a compositional bias: low complexity.

As to quaternary structure, interacts with SRC. Interacts with LCK when tyrosine phosphorylated. Tyrosine phosphorylated (by SRC).

It localises to the cytoplasm. In terms of biological role, may play a role in a signaling cascade by enhancing the kinase activity of SRC. Contributes to SRC-regulated transcription activation. The protein is Actin filament-associated protein 1-like 2 (AFAP1L2) of Bos taurus (Bovine).